The chain runs to 145 residues: Large ribosomal subunit protein uL15 (145 aa).

Positions Met1–Glu50 are disordered. The span at Arg20 to Ser30 shows a compositional bias: gly residues.

Belongs to the universal ribosomal protein uL15 family. Part of the 50S ribosomal subunit.

Binds to the 23S rRNA. The chain is Large ribosomal subunit protein uL15 from Aster yellows witches'-broom phytoplasma (strain AYWB).